The sequence spans 322 residues: Protein IRREGULAR XYLEM 15 (322 aa).

A helical membrane pass occupies residues 28–48; sequence LWLLAFVSFFTIVFLLTLLYT.

As to expression, expressed in rosette leaves, stems and siliques. Expressed in the xylem.

It is found in the golgi apparatus membrane. Functionally, required for xylan biosynthesis, but not directly involved in catalyzing the addition of sugars to the growing polymer. The polypeptide is Protein IRREGULAR XYLEM 15 (IRX15) (Arabidopsis thaliana (Mouse-ear cress)).